A 444-amino-acid chain; its full sequence is Cell division cycle 20.4, cofactor of APC complex (444 aa).

Positions 88–99 (LLSTNHSDSPHQ) are enriched in polar residues. The segment at 88-108 (LLSTNHSDSPHQNPKPVKPRR) is disordered. WD repeat units follow at residues 124 to 161 (RDDF…TSEL), 166 to 205 (EDKG…QVRT), 209 to 246 (GHES…SIVE), 250 to 289 (GHTE…SKQT), 298 to 340 (EHTA…CLNS), 342 to 383 (ETGS…KMAE), and 386 to 425 (GHTS…PKTT).

Belongs to the WD repeat CDC20/Fizzy family. The APC/C is composed of at least 11 subunits that stay tightly associated throughout the cell cycle.

The protein localises to the cytoplasm. It participates in protein modification; protein ubiquitination. In terms of biological role, component of the anaphase promoting complex/cyclosome (APC/C), a cell cycle-regulated E3 ubiquitin-protein ligase complex that controls progression through mitosis and the G1 phase of the cell cycle. This Arabidopsis thaliana (Mouse-ear cress) protein is Cell division cycle 20.4, cofactor of APC complex (CDC20-4).